Consider the following 763-residue polypeptide: Photosystem I P700 chlorophyll a apoprotein A1 (763 aa).

Transmembrane regions (helical) follow at residues 72–95, 158–181, 197–221, 305–323, 360–383, 399–425, 447–469, and 544–562; these read IFSA…FHGA, LYVT…FHYH, LNHH…HVSL, TAHH…GHMY, WHAQ…HHMY, LSLF…IFMV, AIIS…LYIH, and FMVH…LILL. 2 residues coordinate [4Fe-4S] cluster: Cys-586 and Cys-595. Helical transmembrane passes span 602–623 and 677–699; these read HVFL…HYSW and TSAY…MFLF. His-688 contacts chlorophyll a'. Chlorophyll a contacts are provided by Met-696 and Tyr-704. Position 705 (Trp-705) interacts with phylloquinone. Residues 737-757 form a helical membrane-spanning segment; the sequence is AVGVAHYLLGGIVTTWSFFLA.

This sequence belongs to the PsaA/PsaB family. As to quaternary structure, the PsaA/B heterodimer binds the P700 chlorophyll special pair and subsequent electron acceptors. PSI consists of a core antenna complex that captures photons, and an electron transfer chain that converts photonic excitation into a charge separation. The cyanobacterial PSI reaction center is composed of one copy each of PsaA,B,C,D,E,F,I,J,K,L,M and X, and forms trimeric complexes. PSI electron transfer chain: 5 chlorophyll a, 1 chlorophyll a', 2 phylloquinones and 3 4Fe-4S clusters. PSI core antenna: 90 chlorophyll a, 22 carotenoids, 3 phospholipids and 1 galactolipid. P700 is a chlorophyll a/chlorophyll a' dimer, A0 is one or more chlorophyll a, A1 is one or both phylloquinones and FX is a shared 4Fe-4S iron-sulfur center. serves as cofactor.

The protein resides in the cellular thylakoid membrane. It catalyses the reaction reduced [plastocyanin] + hnu + oxidized [2Fe-2S]-[ferredoxin] = oxidized [plastocyanin] + reduced [2Fe-2S]-[ferredoxin]. In terms of biological role, psaA and PsaB bind P700, the primary electron donor of photosystem I (PSI), as well as the electron acceptors A0, A1 and FX. PSI is a plastocyanin/cytochrome c6-ferredoxin oxidoreductase, converting photonic excitation into a charge separation, which transfers an electron from the donor P700 chlorophyll pair to the spectroscopically characterized acceptors A0, A1, FX, FA and FB in turn. Oxidized P700 is reduced on the lumenal side of the thylakoid membrane by plastocyanin or cytochrome c6. This Synechococcus elongatus (strain ATCC 33912 / PCC 7942 / FACHB-805) (Anacystis nidulans R2) protein is Photosystem I P700 chlorophyll a apoprotein A1.